The chain runs to 210 residues: Uracil phosphoribosyltransferase (210 aa).

5-phospho-alpha-D-ribose 1-diphosphate is bound by residues arginine 78, arginine 103, and 130–138 (DPMLATGGS). Uracil-binding positions include isoleucine 193 and 198-200 (GDA). A 5-phospho-alpha-D-ribose 1-diphosphate-binding site is contributed by aspartate 199.

Belongs to the UPRTase family. It depends on Mg(2+) as a cofactor.

It carries out the reaction UMP + diphosphate = 5-phospho-alpha-D-ribose 1-diphosphate + uracil. It functions in the pathway pyrimidine metabolism; UMP biosynthesis via salvage pathway; UMP from uracil: step 1/1. With respect to regulation, allosterically activated by GTP. Functionally, catalyzes the conversion of uracil and 5-phospho-alpha-D-ribose 1-diphosphate (PRPP) to UMP and diphosphate. This Laribacter hongkongensis (strain HLHK9) protein is Uracil phosphoribosyltransferase.